The chain runs to 383 residues: 8-amino-7-oxononanoate synthase (383 aa).

Arginine 23 contacts substrate. 110–111 (GF) contacts pyridoxal 5'-phosphate. Histidine 135 provides a ligand contact to substrate. Pyridoxal 5'-phosphate contacts are provided by serine 181, histidine 209, and threonine 235. Lysine 238 bears the N6-(pyridoxal phosphate)lysine mark. Threonine 351 lines the substrate pocket.

Belongs to the class-II pyridoxal-phosphate-dependent aminotransferase family. BioF subfamily. In terms of assembly, homodimer. The cofactor is pyridoxal 5'-phosphate.

The catalysed reaction is 6-carboxyhexanoyl-[ACP] + L-alanine + H(+) = (8S)-8-amino-7-oxononanoate + holo-[ACP] + CO2. Its pathway is cofactor biosynthesis; biotin biosynthesis. Its function is as follows. Catalyzes the decarboxylative condensation of pimeloyl-[acyl-carrier protein] and L-alanine to produce 8-amino-7-oxononanoate (AON), [acyl-carrier protein], and carbon dioxide. The polypeptide is 8-amino-7-oxononanoate synthase (Aliivibrio fischeri (strain MJ11) (Vibrio fischeri)).